The sequence spans 756 residues: MLGICRGRRKFLAASLTVLFVPAVTWIYLFAGSFEDGKPVSLSPLESQPHSPRYTASSQRDRESLEVRMREVEEENRVLRKQLSLAQGRSPSHHRGNHSKTYSMEEGTGDSESLRAGIVAGNSSECGQQPAVEKCETIHVAIVCAGYNASRDVVTLVKSVLFHRRNPLHFHLIADAIAKQILATLFQTWMVPAVRIDFYDADELKSEVSWIPNKHYSGIYGLMKLVLTKTLPSNLERVIVLDTDITFATDIAELWAVFHKFKGQQVLGLVENQSDWYLGNLWKNHRPWPALGRGYNTGVILLLLDKLRKMKWEQMWRLTAERELMSMLSTSLADQDIFNAVIKQNPFLVYQLPCFWNVQLSDHTRSEQCYRDVSDLKVIHWNSPKKLRVKNKHVEFFRNLYLTFLEYDGNLLRRELFGCPSEADVNSENLQKQLSEPDEDDLCYEFRRERFTVHRTHLYFLHYEYEPASDNTDVTLVAQLSMDRLQMLEAICKHWEDPISLALYLSDAEAQQFLRYAQGSEVLMSRHNVGYHIVYKEGQFYPVNLLRNVAMKHISTPYMFLSDIDFLPMYGLYEYLRKSVTQLDLANTKKALIIPAFETLRYRLSFPKSKAELLSMLDMGTLFTFRYHVWTKGHAPTNFAKWRTATTPYRVEWEADFEPYVVVRKDCPEYDRRFVGFGWNKVAHIMELDAQEYEFTVLPNAYMIHMPHAPSFDITKFRSNKQYRICLKTLKEEFQQDMSRHYGFAALKYLTAENNS.

The Cytoplasmic portion of the chain corresponds to 1-10 (MLGICRGRRK). The helical; Signal-anchor for type II membrane protein transmembrane segment at 11–31 (FLAASLTVLFVPAVTWIYLFA) threads the bilayer. Residues 32 to 756 (GSFEDGKPVS…LKYLTAENNS (725 aa)) lie on the Lumenal side of the membrane. 2 disordered regions span residues 42 to 63 (LSPL…RDRE) and 81 to 109 (KQLS…EGTG). The segment covering 44–58 (PLESQPHSPRYTASS) has biased composition (polar residues). Residues 55–90 (TASSQRDRESLEVRMREVEEENRVLRKQLSLAQGRS) are a coiled coil. N-linked (GlcNAc...) asparagine glycosylation is found at N97, N122, and N148. Residues 138 to 413 (IHVAIVCAGY…FLEYDGNLLR (276 aa)) are xylosyltransferase activity. Positions 242 and 244 each coordinate Mn(2+). N-linked (GlcNAc...) asparagine glycosylation occurs at N272. Positions 414-756 (RELFGCPSEA…LKYLTAENNS (343 aa)) are glucuronyltransferase activity. Positions 563 and 565 each coordinate Mn(2+).

In the C-terminal section; belongs to the glycosyltransferase 49 family. This sequence in the N-terminal section; belongs to the glycosyltransferase 8 family. The cofactor is Mn(2+).

The protein localises to the golgi apparatus membrane. It catalyses the reaction 3-O-[beta-D-GlcA-(1-&gt;3)-beta-D-Xyl-(1-&gt;4)-Rib-ol-P-Rib-ol-P-3-beta-D-GalNAc-(1-&gt;3)-beta-D-GlcNAc-(1-&gt;4)-(O-6-P-alpha-D-Man)]-Thr-[protein] + UDP-alpha-D-xylose = 3-O-[alpha-D-Xyl-(1-&gt;3)-beta-D-GlcA-(1-&gt;4)-beta-D-Xyl-(1-&gt;4)-Rib-ol-P-Rib-ol-P-3-beta-D-GalNAc-(1-&gt;3)-beta-D-GlcNAc-(1-&gt;4)-(O-6-P-alpha-D-Man)]-Thr-[protein] + UDP + H(+). It carries out the reaction 3-O-{(1-&gt;[3)-alpha-D-Xyl-(1-&gt;3)-beta-D-GlcA-(1-&gt;](n)-4)-beta-D-Xyl-(1-&gt;4)-Rib-ol-P-Rib-ol-P-3-beta-D-GalNAc-(1-&gt;3)-beta-D-GlcNAc-(1-&gt;4)-O-6-P-alpha-D-Man}-L-Thr-[protein] + UDP-alpha-D-glucuronate = 3-O-{beta-D-GlcA-(1-&gt;[3)-alpha-D-Xyl-(1-&gt;3)-beta-D-GlcA-(1-&gt;](n)-4)-beta-D-Xyl-(1-&gt;4)-Rib-ol-P-Rib-ol-P-3-beta-D-GalNAc-(1-&gt;3)-beta-D-GlcNAc-(1-&gt;4)-O-6-P-alpha-D-Man}-L-Thr-[protein] + UDP + H(+). The catalysed reaction is 3-O-{beta-D-GlcA-(1-&gt;[3)-alpha-D-Xyl-(1-&gt;3)-beta-D-GlcA-(1-&gt;](n)-4)-beta-D-Xyl-(1-&gt;4)-Rib-ol-P-Rib-ol-P-3-beta-D-GalNAc-(1-&gt;3)-beta-D-GlcNAc-(1-&gt;4)-O-6-P-alpha-D-Man}-L-Thr-[protein] + UDP-alpha-D-xylose = 3-O-{(1-&gt;[3)-alpha-D-Xyl-(1-&gt;3)-beta-D-GlcA-(1-&gt;](n+1)-4)-beta-D-Xyl-(1-&gt;4)-Rib-ol-P-Rib-ol-P-3-beta-D-GalNAc-(1-&gt;3)-beta-D-GlcNAc-(1-&gt;4)-O-6-P-alpha-D-Man}-L-Thr-[protein] + UDP + H(+). It functions in the pathway protein modification; protein glycosylation. Its function is as follows. Bifunctional glycosyltransferase with both alpha-1,3-xylosyltransferase and beta-1,3-glucuronyltransferase activities involved in the maturation of alpha-dystroglycan (DAG1) by glycosylation leading to DAG1 binding to laminin G-like domain-containing extracellular proteins with high affinity. Elongates the glucuronyl-beta-1,4-xylose-beta disaccharide primer structure initiated by B4GAT1 by adding repeating units [-3-Xylose-alpha-1,3-GlcA-beta-1-] to produce a heteropolysaccharide. Requires the phosphorylation of core M3 (O-mannosyl trisaccharide) by POMK to elongate the glucuronyl-beta-1,4-xylose-beta disaccharide primer. Plays a key role in skeletal muscle function and regeneration. The sequence is that of Xylosyl- and glucuronyltransferase LARGE1 from Gallus gallus (Chicken).